The following is a 206-amino-acid chain: Somatotropin (206 aa).

An N-terminal signal peptide occupies residues 1–18; it reads MLDRVVVLLSVLCLGVSS. A Pyrrolidone carboxylic acid modification is found at glutamine 19. Zn(2+) is bound at residue histidine 37. A disulfide bridge connects residues cysteine 70 and cysteine 179. Glutamate 188 lines the Zn(2+) pocket. Cysteine 196 and cysteine 204 form a disulfide bridge.

Belongs to the somatotropin/prolactin family.

It localises to the secreted. Functionally, growth hormone plays an important role in growth control and is involved in the regulation of several anabolic processes. Implicated as an osmoregulatory substance important for seawater adaptation. The protein is Somatotropin (gh) of Pseudocaranx dentex (White trevally).